The chain runs to 285 residues: OPEP-3 protein (285 aa).

This is OPEP-3 protein (OPEP-3) from Orgyia pseudotsugata multicapsid polyhedrosis virus (OpMNPV).